A 607-amino-acid polypeptide reads, in one-letter code: 1-deoxy-D-xylulose-5-phosphate synthase (607 aa).

Residues His63 and Gly104–Ser106 contribute to the thiamine diphosphate site. A Mg(2+)-binding site is contributed by Asp135. Residues Gly136 to Ala137, Asn164, Tyr271, and Glu351 each bind thiamine diphosphate. Mg(2+) is bound at residue Asn164.

Belongs to the transketolase family. DXPS subfamily. As to quaternary structure, homodimer. Mg(2+) serves as cofactor. The cofactor is thiamine diphosphate.

It carries out the reaction D-glyceraldehyde 3-phosphate + pyruvate + H(+) = 1-deoxy-D-xylulose 5-phosphate + CO2. It functions in the pathway metabolic intermediate biosynthesis; 1-deoxy-D-xylulose 5-phosphate biosynthesis; 1-deoxy-D-xylulose 5-phosphate from D-glyceraldehyde 3-phosphate and pyruvate: step 1/1. Catalyzes the acyloin condensation reaction between C atoms 2 and 3 of pyruvate and glyceraldehyde 3-phosphate to yield 1-deoxy-D-xylulose-5-phosphate (DXP). This chain is 1-deoxy-D-xylulose-5-phosphate synthase, found in Campylobacter hominis (strain ATCC BAA-381 / DSM 21671 / CCUG 45161 / LMG 19568 / NCTC 13146 / CH001A).